The following is a 547-amino-acid chain: TBCC domain-containing protein 1 (547 aa).

A C-CAP/cofactor C-like domain is found at 304 to 435 (PHTHRMVVMS…LEDHMAQTGL (132 aa)).

The protein belongs to the TBCC family.

The protein localises to the cytoplasm. It is found in the cytoskeleton. It localises to the microtubule organizing center. Its subcellular location is the centrosome. The protein resides in the spindle pole. May play a role in the regulation of centrosome and Golgi apparatus positioning. This Xenopus laevis (African clawed frog) protein is TBCC domain-containing protein 1 (tbccd1).